Here is a 376-residue protein sequence, read N- to C-terminus: Lactosylceramide 1,3-N-acetyl-beta-D-glucosaminyltransferase (376 aa).

Residues 1 to 13 (MRLFVSRRVKRWK) lie on the Cytoplasmic side of the membrane. Residues 14 to 34 (IFHFFVTCFILSFMVFWSPIN) traverse the membrane as a helical; Signal-anchor for type II membrane protein segment. At 35 to 376 (NYIMSHMKSY…NSYPCWAAFA (342 aa)) the chain is on the lumenal side. Residue N57 is glycosylated (N-linked (GlcNAc...) asparagine).

This sequence belongs to the glycosyltransferase 31 family. In terms of tissue distribution, highly expressed in adult spleen, placenta and cerebellar Purkinje cells where it colocalizes with HNK-1. Expressed at lower level in brain, lung, thymus and muscle.

It is found in the golgi apparatus membrane. It catalyses the reaction a beta-D-Gal-(1-&gt;4)-beta-D-Glc-(1&lt;-&gt;1)-Cer(d18:1(4E)) + UDP-N-acetyl-alpha-D-glucosamine = a beta-D-GlcNAc-(1-&gt;3)-beta-D-Gal-(1-&gt;4)-beta-D-Glc-(1&lt;-&gt;1)-Cer(d18:1(4E)) + UDP + H(+). The catalysed reaction is a neolactoside nLc4Cer(d18:1(4E)) + UDP-N-acetyl-alpha-D-glucosamine = a neolactoside IV(3)-beta-GlcNAc-nLc4Cer(d18:1(4E)) + UDP + H(+). It participates in protein modification; protein glycosylation. Beta-1,3-N-acetylglucosaminyltransferase that plays a key role in the synthesis of lacto- or neolacto-series carbohydrate chains on glycolipids, notably by participating in biosynthesis of HNK-1 and Lewis X carbohydrate structures. Has strong activity toward lactosylceramide (LacCer) and neolactotetraosylceramide (nLc(4)Cer; paragloboside), resulting in the synthesis of Lc(3)Cer and neolactopentaosylceramide (nLc(5)Cer), respectively. Plays a central role in regulating neolacto-series glycolipid synthesis during embryonic development. The polypeptide is Lactosylceramide 1,3-N-acetyl-beta-D-glucosaminyltransferase (Mus musculus (Mouse)).